The primary structure comprises 418 residues: MDPDLFLRKVSTLQAGFRGFLVRRQFQSLRAEYEAIVQEIEGDLSTLQWTGGWIPKPVFLPEAKSHQSWKAEKISNPEQKLWSHSPHKDSEKELIWEEMVQKKTEKSPANPGSLCRDDSAWPQAEQGRKASQGNSQDTSVSKMENADLGLSQSQQELQEQRNHLAMELLWLQQAINSRKEYLILKQTLRSPEASQTRDKHRGQAYEKTSLHSSCVLDNQSYRDRIIGESHHAEDSSHKGRLKPQKHPDSVTSAGKTTAGSKGRELCYRNSASQLPAALESQAGGDRVTKGPDHGGQPFKETSLQQLKVLEDQIPGDLKFRSPCSRKAETQLPTLSENQNIEDRYSRKPSRSAGPCDLNILEGHMIWDETLAGQEQGSLDLIRTKPPKSQPPSAGSSGHGNTSELSPEGWKNRGILQWR.

The 30-residue stretch at 6–35 folds into the IQ domain; the sequence is FLRKVSTLQAGFRGFLVRRQFQSLRAEYEA. Disordered stretches follow at residues 101–142, 230–264, 280–299, 327–355, and 376–418; these read QKKT…SVSK, HHAEDSSHKGRLKPQKHPDSVTSAGKTTAGSKGRE, SQAGGDRVTKGPDHGGQPFK, AETQLPTLSENQNIEDRYSRKPSRSAGPC, and GSLD…LQWR. 2 stretches are compositionally biased toward polar residues: residues 129-142 and 249-259; these read KASQGNSQDTSVSK and SVTSAGKTTAG. A coiled-coil region spans residues 141 to 176; the sequence is SKMENADLGLSQSQQELQEQRNHLAMELLWLQQAIN. The segment covering 390–404 has biased composition (polar residues); the sequence is PPSAGSSGHGNTSEL.

This is IQ domain-containing protein C (Iqcc) from Mus musculus (Mouse).